Consider the following 89-residue polypeptide: Large ribosomal subunit protein bL27 (89 aa).

The segment at 1–22 (MAHKKAGGSSRNGRDSESKRLG) is disordered.

This sequence belongs to the bacterial ribosomal protein bL27 family.

The chain is Large ribosomal subunit protein bL27 from Bartonella tribocorum (strain CIP 105476 / IBS 506).